The following is a 263-amino-acid chain: Lens fiber major intrinsic protein (263 aa).

At 1-9 (MWELRSASF) the chain is on the cytoplasmic side. Residues 10–29 (WRAIFAEFFATLFYVFFGLG) traverse the membrane as a helical segment. The Extracellular segment spans residues 30-41 (SSLRWAPGPLHV). The chain crosses the membrane as a helical span at residues 42–59 (LQVAMAFGLALATLVQSV). The Cytoplasmic segment spans residues 60–61 (GH). The segment at residues 62–77 (ISGAHVNPAVTFAFLV) is an intramembrane region (discontinuously helical). The short motif at 68-70 (NPA) is the NPA 1 element. Residues 78-82 (GSQMS) lie on the Cytoplasmic side of the membrane. Residues 83 to 106 (LLRAFCYMAAQLLGAVAGAAVLYS) traverse the membrane as a helical segment. At 107 to 127 (VTPPAVRGNLALNTLHPAVSV) the chain is on the extracellular side. A helical transmembrane segment spans residues 128 to 148 (GQATTVEIFLTLQFVLCIFAT). The Cytoplasmic portion of the chain corresponds to 149–156 (YDERRNGQ). A helical membrane pass occupies residues 157–175 (LGSVALAVGFSLALGHLFG). Over 176-178 (MYY) the chain is Extracellular. Positions 179 to 193 (TGAGMNPARSFAPAI) form an intramembrane region, discontinuously helical. The NPA 2 motif lies at 184 to 186 (NPA). Residues 194–200 (LTGNFTN) lie on the Extracellular side of the membrane. The chain crosses the membrane as a helical span at residues 201-222 (HWVYWVGPIIGGGLGSLLYDFL). Residues 223–263 (LFPRLKSISERLSVLKGAKPDVSNGQPEVTGEPVELNTQAL) are Cytoplasmic-facing. The interval 227-237 (LKSISERLSVL) is interaction with CALM. A phosphoserine mark is found at Ser235 and Ser245. Asn246 and Asn259 each carry deamidated asparagine; by deterioration.

This sequence belongs to the MIP/aquaporin (TC 1.A.8) family. As to quaternary structure, homotetramer; each monomer provides an independent water pore. Two homotetramers on opposing membranes can dimerize, forming a cell-cell junction. Interacts with CALM; the calcium-calmodulin/CALM complex interacts with the cytoplasmic domains of two aquaporins, leading to channel closure. Interacts with BFSP1 (via C-terminus); prevents calcium-dependent inhibition of the water channel activity. Subject to partial proteolytic cleavage in the eye lens core. Partial proteolysis promotes interactions between tetramers from adjoining membranes. In terms of processing, fatty acylated at Met-1 and Lys-238. The acyl modifications, in decreasing order of ion abundance, are: oleoyl (C18:1) &gt; palmitoyl (C16:0) &gt; stearoyl (C18:0) &gt; eicosenoyl (C20:1) &gt; dihomo-gamma-linolenoyl (C20:3) &gt; palmitoleoyl (C16:1) &gt; eicosadienoyl (C20:2). Expressed in the cortex and nucleus of the retina lens (at protein level). Major component of lens fiber gap junctions.

It is found in the cell membrane. The protein localises to the cell junction. The catalysed reaction is H2O(in) = H2O(out). The water channel activity is inhibited by calcium through calmodulin/CALM. In terms of biological role, aquaporins form homotetrameric transmembrane channels, with each monomer independently mediating water transport across the plasma membrane along its osmotic gradient. Specifically expressed in lens fiber cells, this aquaporin is crucial for maintaining lens water homeostasis and transparency. Beyond water permeability, it also acts as a cell-to-cell adhesion molecule, forming thin junctions between lens fiber cells that are essential for maintaining the ordered structure and transparency of the lens. In Homo sapiens (Human), this protein is Lens fiber major intrinsic protein.